The primary structure comprises 648 residues: Threonine--tRNA ligase (648 aa).

The TGS domain occupies 1–63 (MSQISLTFPD…AASGRIAINT (63 aa)). A catalytic region spans residues 247–544 (DHRKLGREME…LIENYSGKLP (298 aa)). Residues cysteine 344, histidine 395, and histidine 521 each contribute to the Zn(2+) site.

The protein belongs to the class-II aminoacyl-tRNA synthetase family. In terms of assembly, homodimer. Zn(2+) serves as cofactor.

The protein localises to the cytoplasm. The enzyme catalyses tRNA(Thr) + L-threonine + ATP = L-threonyl-tRNA(Thr) + AMP + diphosphate + H(+). In terms of biological role, catalyzes the attachment of threonine to tRNA(Thr) in a two-step reaction: L-threonine is first activated by ATP to form Thr-AMP and then transferred to the acceptor end of tRNA(Thr). Also edits incorrectly charged L-seryl-tRNA(Thr). This Paracoccus denitrificans (strain Pd 1222) protein is Threonine--tRNA ligase.